The sequence spans 184 residues: Jacalin-related lectin 2 (184 aa).

The 160-residue stretch at 4 to 163 folds into the Jacalin-type lectin domain; sequence KIKIGPVGTD…LQNIGVYLQP (160 aa).

Belongs to the jacalin lectin family.

The chain is Jacalin-related lectin 2 (JAL2) from Arabidopsis thaliana (Mouse-ear cress).